The sequence spans 251 residues: DNA repair protein RecO (251 aa).

It belongs to the RecO family.

Its function is as follows. Involved in DNA repair and RecF pathway recombination. This chain is DNA repair protein RecO, found in Macrococcus caseolyticus (strain JCSC5402) (Macrococcoides caseolyticum).